The chain runs to 743 residues: Putative cation exchanger C3A12.06c (743 aa).

The next 13 helical transmembrane spans lie at 13–33 (LILLWCILGIAYILFWTHRIS), 109–129 (FPVLSIIVGWLIFLFITIGIS), 138–158 (LVTISWLLQLPDSVVGVTFLA), 182–202 (IGELLGSAFFIVAIVAGSVCL), 213–233 (FLRDVAFLTGTILLVIMFVLH), 239–258 (IWQSLVMILYYLLYVLFVFF), 528–548 (LRLLQCVFVPFAFVTFSITGG), 551–571 (LYIYAASSVFSILCITALYYY), 580–600 (FLPWVSFIGFVLGIIWISTIA), 609–629 (ALGVIFNLNESILGLTVFAAG), 649–669 (MAMGGVFGGPTLNILIGIGIS), 690–710 (LSITAYFLLACLLLLLIYVPL), and 718–738 (VLGLLLFILYIVGTSTNIVVE).

It belongs to the Ca(2+):cation antiporter (CaCA) (TC 2.A.19) family.

The protein resides in the endoplasmic reticulum membrane. Putative cation exchanger. The protein is Putative cation exchanger C3A12.06c of Schizosaccharomyces pombe (strain 972 / ATCC 24843) (Fission yeast).